The following is a 480-amino-acid chain: Aspartyl/glutamyl-tRNA(Asn/Gln) amidotransferase subunit B (480 aa).

This sequence belongs to the GatB/GatE family. GatB subfamily. Heterotrimer of A, B and C subunits.

It carries out the reaction L-glutamyl-tRNA(Gln) + L-glutamine + ATP + H2O = L-glutaminyl-tRNA(Gln) + L-glutamate + ADP + phosphate + H(+). The catalysed reaction is L-aspartyl-tRNA(Asn) + L-glutamine + ATP + H2O = L-asparaginyl-tRNA(Asn) + L-glutamate + ADP + phosphate + 2 H(+). Allows the formation of correctly charged Asn-tRNA(Asn) or Gln-tRNA(Gln) through the transamidation of misacylated Asp-tRNA(Asn) or Glu-tRNA(Gln) in organisms which lack either or both of asparaginyl-tRNA or glutaminyl-tRNA synthetases. The reaction takes place in the presence of glutamine and ATP through an activated phospho-Asp-tRNA(Asn) or phospho-Glu-tRNA(Gln). This Caldicellulosiruptor saccharolyticus (strain ATCC 43494 / DSM 8903 / Tp8T 6331) protein is Aspartyl/glutamyl-tRNA(Asn/Gln) amidotransferase subunit B.